The chain runs to 336 residues: Tetraacyldisaccharide 4'-kinase (336 aa).

Residue 60-67 participates in ATP binding; that stretch reads TVGGTGKT.

This sequence belongs to the LpxK family.

The enzyme catalyses a lipid A disaccharide + ATP = a lipid IVA + ADP + H(+). The protein operates within glycolipid biosynthesis; lipid IV(A) biosynthesis; lipid IV(A) from (3R)-3-hydroxytetradecanoyl-[acyl-carrier-protein] and UDP-N-acetyl-alpha-D-glucosamine: step 6/6. Its function is as follows. Transfers the gamma-phosphate of ATP to the 4'-position of a tetraacyldisaccharide 1-phosphate intermediate (termed DS-1-P) to form tetraacyldisaccharide 1,4'-bis-phosphate (lipid IVA). This chain is Tetraacyldisaccharide 4'-kinase, found in Pseudomonas fluorescens (strain SBW25).